We begin with the raw amino-acid sequence, 199 residues long: Probable GTP-binding protein EngB (199 aa).

Residues 28–199 enclose the EngB-type G domain; it reads DLPEIALAGR…DSWDAILEQV (172 aa). Residues 36 to 43, 63 to 67, 81 to 84, 148 to 151, and 180 to 182 each bind GTP; these read GRSNVGKS, GKTQL, DVPG, TKAD, and FSS. 2 residues coordinate Mg(2+): serine 43 and threonine 65.

Belongs to the TRAFAC class TrmE-Era-EngA-EngB-Septin-like GTPase superfamily. EngB GTPase family. Requires Mg(2+) as cofactor.

Necessary for normal cell division and for the maintenance of normal septation. The protein is Probable GTP-binding protein EngB of Streptococcus pyogenes serotype M28 (strain MGAS6180).